We begin with the raw amino-acid sequence, 325 residues long: MKVFDYEDVQLIPNKCIVNSRSECDTTVILGKHAFKMPIVPANMQTIINRSIAEFLAENGYFYIMHRFNGSARIPFVKKMKERQWISSISVGVKKEEYLLIEELAKQGLTPDYITIDIAHGHSNSVIEMIQRIKTHLPETFVIAGNVGTPEAVRELENAGADATKVGIGPGKVCITKIKTGFGTGGWQLAALRWCAKAARKPIIADGGIRTHGDIAKSIRFGATMVMIGSLFAGHEESSGETKIENGIAYKEYFGSASEFQKGEKKNVEGKKIWIQHKGSLKDTLIEMHQDLQSSISYAGGRDLEAIRKVDYVIVKNSIFNGDTI.

Cysteine 174 (thioimidate intermediate) is an active-site residue. 203–226 is a binding site for NADP(+); sequence IIADGGIRTHGDIAKSIRFGATMV.

This sequence belongs to the IMPDH/GMPR family. GuaC type 2 subfamily.

It catalyses the reaction IMP + NH4(+) + NADP(+) = GMP + NADPH + 2 H(+). Functionally, catalyzes the irreversible NADPH-dependent deamination of GMP to IMP. It functions in the conversion of nucleobase, nucleoside and nucleotide derivatives of G to A nucleotides, and in maintaining the intracellular balance of A and G nucleotides. The protein is GMP reductase of Helicobacter pylori (strain G27).